The following is a 328-amino-acid chain: Phosphate acyltransferase (328 aa).

It belongs to the PlsX family. Homodimer. Probably interacts with PlsY.

The protein localises to the cytoplasm. The enzyme catalyses a fatty acyl-[ACP] + phosphate = an acyl phosphate + holo-[ACP]. The protein operates within lipid metabolism; phospholipid metabolism. Its function is as follows. Catalyzes the reversible formation of acyl-phosphate (acyl-PO(4)) from acyl-[acyl-carrier-protein] (acyl-ACP). This enzyme utilizes acyl-ACP as fatty acyl donor, but not acyl-CoA. The protein is Phosphate acyltransferase of Campylobacter jejuni subsp. jejuni serotype O:23/36 (strain 81-176).